Consider the following 655-residue polypeptide: p-hydroxybenzoic acid efflux pump subunit AaeB (655 aa).

Residues 1-12 lie on the Periplasmic side of the membrane; it reads MGIFSIANQHIR. The helical transmembrane segment at 13 to 33 threads the bilayer; the sequence is FAVKLATAIVLALFVGFHFQL. The Cytoplasmic segment spans residues 34–37; the sequence is ETPR. The helical transmembrane segment at 38–58 threads the bilayer; the sequence is WAVLTAAIVAAGTAFAAGGEP. The Periplasmic segment spans residues 59–68; sequence YSGAIRYRGF. A helical transmembrane segment spans residues 69 to 89; it reads LRIIGTFIGCIAGLVIIIAMI. Topologically, residues 90-92 are cytoplasmic; it reads RAP. Residues 93-113 traverse the membrane as a helical segment; sequence LLMILVCCIWAGFCTWISSLV. Residues 114 to 120 lie on the Periplasmic side of the membrane; it reads RIENSYA. A helical membrane pass occupies residues 121–141; that stretch reads WGLAGYTALIIVITIQPEPLL. Residues 142 to 151 are Cytoplasmic-facing; sequence TPQFAVERCS. The chain crosses the membrane as a helical span at residues 152–172; the sequence is EIVIGIVCAIMADLLFSPRSI. Topologically, residues 173 to 369 are periplasmic; that stretch reads KQEVDRELES…RTTLSCILGT (197 aa). The helical transmembrane segment at 370 to 390 threads the bilayer; the sequence is LFWLWTGWTSGSGAMVMIAVV. The Cytoplasmic portion of the chain corresponds to 391–406; that stretch reads TSLAMRLPNPRMVAID. Residues 407–427 traverse the membrane as a helical segment; the sequence is FIYGTLAALPLGLLYFLVIIP. The Periplasmic segment spans residues 428–430; the sequence is NTQ. The helical transmembrane segment at 431-451 threads the bilayer; that stretch reads QSMLLLCISLAVLGFFLGIEV. At 452–458 the chain is on the cytoplasmic side; that stretch reads QKRRLGS. The helical transmembrane segment at 459–479 threads the bilayer; it reads MGALASTINIIVLDNPMTFHF. Over 480–481 the chain is Periplasmic; the sequence is SQ. Residues 482–502 form a helical membrane-spanning segment; sequence FLDSALGQIVGCVLAFTVILL. At 503–655 the chain is on the cytoplasmic side; the sequence is VRDKSRDRTG…HKYQHALTDS (153 aa).

This sequence belongs to the aromatic acid exporter ArAE (TC 2.A.85) family.

The protein resides in the cell inner membrane. In terms of biological role, forms an efflux pump with AaeA. Could function as a metabolic relief valve, allowing to eliminate certain compounds when they accumulate to high levels in the cell. Substrates are p-hydroxybenzoic acid (pHBA), 6-hydroxy-2-naphthoic and 2-hydroxycinnamate. In Escherichia coli (strain K12), this protein is p-hydroxybenzoic acid efflux pump subunit AaeB.